The sequence spans 490 residues: Subtilisin-like protease 8 (490 aa).

The signal sequence occupies residues 1-26 (MKGLLSLSVLPVLAYASPMIVDSIHQ). Positions 27 to 134 (DAAPILSSTN…YIERDSEVRA (108 aa)) are excised as a propeptide. One can recognise an Inhibitor I9 domain in the interval 43 to 133 (SYIVVFKKGV…EYIERDSEVR (91 aa)). In terms of domain architecture, Peptidase S8 spans 144–450 (PWGLARISHR…GGSDNYKEIV (307 aa)). Catalysis depends on charge relay system residues aspartate 180 and histidine 212. The N-linked (GlcNAc...) asparagine glycan is linked to asparagine 282. The active-site Charge relay system is the serine 378. An N-linked (GlcNAc...) asparagine glycan is attached at asparagine 455.

Belongs to the peptidase S8 family.

It localises to the secreted. Secreted subtilisin-like serine protease with keratinolytic activity that contributes to pathogenicity. The protein is Subtilisin-like protease 8 (SUB8) of Arthroderma otae (strain ATCC MYA-4605 / CBS 113480) (Microsporum canis).